The chain runs to 221 residues: MENNDELMPREKLLAFGAKALSDYELLAIFLRTGIKDCPVMSLSKNVLTHFGSLHALLSADKKAFCSVKGLGITQFIQLQAITEMTKRYLKQEMLSTPIINDLETVKLFLLTELQHEEREVFMVLFLDNQHRLIKKERLFLGTINVSAVYPREIIKEALYCNAAALILAHNHPSGITEPSYSDQLITKKIQDAAELMEIRVLDHLIVGKSDCYSFAENCLL.

Residues 98–221 form the MPN domain; sequence PIINDLETVK…CYSFAENCLL (124 aa). 3 residues coordinate Zn(2+): H170, H172, and D183. Positions 170–183 match the JAMM motif motif; the sequence is HNHPSGITEPSYSD.

This sequence belongs to the UPF0758 family.

This is UPF0758 protein NTHI1125 from Haemophilus influenzae (strain 86-028NP).